Here is a 188-residue protein sequence, read N- to C-terminus: MKANDIKKGNVVEYNGGIYQIRDIERSSPQGRGGNVRFRFIMYSVPGGVKTDASFDADDNLPEVELLRRQSTFSYKDGEAFVFMDDEDFTPYTLDADVIGTDAGYITDGLTGIYVQVIDEQPVAVQLPQTVTLEVVETPPELKGGTATKRPKPAKLNTGMEIMVPEYITNGERVLVNTTTGEFAGRAD.

This sequence belongs to the elongation factor P family.

The polypeptide is Elongation factor P-like protein (Xanthomonas axonopodis pv. citri (strain 306)).